The primary structure comprises 151 residues: 6,7-dimethyl-8-ribityllumazine synthase (151 aa).

5-amino-6-(D-ribitylamino)uracil is bound by residues F18, 49-51 (ALE), and 74-76 (CVI). 79–80 (ET) is a binding site for (2S)-2-hydroxy-3-oxobutyl phosphate. H82 (proton donor) is an active-site residue. A 5-amino-6-(D-ribitylamino)uracil-binding site is contributed by N107. (2S)-2-hydroxy-3-oxobutyl phosphate is bound at residue R121.

It belongs to the DMRL synthase family.

It catalyses the reaction (2S)-2-hydroxy-3-oxobutyl phosphate + 5-amino-6-(D-ribitylamino)uracil = 6,7-dimethyl-8-(1-D-ribityl)lumazine + phosphate + 2 H2O + H(+). The protein operates within cofactor biosynthesis; riboflavin biosynthesis; riboflavin from 2-hydroxy-3-oxobutyl phosphate and 5-amino-6-(D-ribitylamino)uracil: step 1/2. Functionally, catalyzes the formation of 6,7-dimethyl-8-ribityllumazine by condensation of 5-amino-6-(D-ribitylamino)uracil with 3,4-dihydroxy-2-butanone 4-phosphate. This is the penultimate step in the biosynthesis of riboflavin. In Bartonella tribocorum (strain CIP 105476 / IBS 506), this protein is 6,7-dimethyl-8-ribityllumazine synthase.